Here is a 37-residue protein sequence, read N- to C-terminus: Hemextin A (37 aa).

In terms of assembly, heterotetramer composed of two A and two B chains; non-covalently linked. Does not exist as a complex in the crude venom. Post-translationally, may contain several disulfide bonds. In terms of tissue distribution, expressed by the venom gland.

The protein resides in the secreted. In terms of biological role, hemextin A (monomer): exhibits mild anticoagulant activity. It specifically inhibits the activation of FX (F10) by the TF-FVIIa complex (extrinsic tenase complex (ETC)) by non-competitively inhibiting the enzymatic activity of FVIIa. Its function is as follows. Hemextin AB complex: specifically inhibits the activation of FX (F10) by the TF-FVIIa complex (extrinsic tenase complex (ETC)) (IC(50)= 100 nM, Ki=25 nM) by non-competitively inhibiting the enzymatic activity of FVIIa. The polypeptide is Hemextin A (Hemachatus haemachatus (Rinkhals)).